We begin with the raw amino-acid sequence, 229 residues long: MGGKTKKHAMRLFDRIAEKYDLLNRILSFGMDTKWRKRVVELILEVNPEKVLDLATGTGDVARLLKRKAPHLEITGLDSSSKMLEIAEKRLKDGEFIVGDAHNLPFYDRSFDAITVAFGFRNFSDRRRVLRECRRVLKRKGRLVILELLPPNTKRFTGKIYSFYLKTWVPFVGGLFSGDFHAYRYLSTSVLNFLTPDQIVEMMKEEGFEVSFEPLFFSVAGIFIGDLIW.

Residues T58, D78, and 100–101 contribute to the S-adenosyl-L-methionine site; that span reads DA.

This sequence belongs to the class I-like SAM-binding methyltransferase superfamily. MenG/UbiE family.

It carries out the reaction a 2-demethylmenaquinol + S-adenosyl-L-methionine = a menaquinol + S-adenosyl-L-homocysteine + H(+). It participates in quinol/quinone metabolism; menaquinone biosynthesis; menaquinol from 1,4-dihydroxy-2-naphthoate: step 2/2. Functionally, methyltransferase required for the conversion of demethylmenaquinol (DMKH2) to menaquinol (MKH2). This chain is Demethylmenaquinone methyltransferase, found in Thermotoga maritima (strain ATCC 43589 / DSM 3109 / JCM 10099 / NBRC 100826 / MSB8).